Reading from the N-terminus, the 455-residue chain is Probable carboxypeptidase MCYG_07204 (455 aa).

The signal sequence occupies residues 1–21; it reads MQKTYLLALLVSSLASVRSLA. N93 carries an N-linked (GlcNAc...) asparagine glycan. D170 lines the Zn(2+) pocket. The Proton acceptor role is filled by E202. Residue E203 coordinates Zn(2+). N390 carries an N-linked (GlcNAc...) asparagine glycan.

It belongs to the peptidase M20A family. Zn(2+) is required as a cofactor.

Its subcellular location is the secreted. This chain is Probable carboxypeptidase MCYG_07204, found in Arthroderma otae (strain ATCC MYA-4605 / CBS 113480) (Microsporum canis).